Reading from the N-terminus, the 90-residue chain is Protein RL8A (90 aa).

Residues 15–34 (WTCEGLLLLLGLLVLFFHHH) traverse the membrane as a helical segment. Residues 55-90 (HESGWYSSDDDGDRDGDEETGESHNRNSVGLSAVFS) are disordered. The segment covering 62–74 (SDDDGDRDGDEET) has biased composition (acidic residues). Polar residues predominate over residues 80–90 (RNSVGLSAVFS).

Its subcellular location is the host membrane. The polypeptide is Protein RL8A (RL8A) (Homo sapiens (Human)).